The sequence spans 272 residues: Phosphatidylglycerol--prolipoprotein diacylglyceryl transferase (272 aa).

7 consecutive transmembrane segments (helical) span residues 17 to 37, 59 to 79, 95 to 115, 129 to 149, 176 to 196, 202 to 222, and 237 to 257; these read LAIR…LGFG, MLFF…VLFY, WEGG…MWLF, FIAP…FING, SQLY…WLFA, MGAV…AAEF, and LSMG…MVVW. An a 1,2-diacyl-sn-glycero-3-phospho-(1'-sn-glycerol)-binding site is contributed by arginine 142.

The protein belongs to the Lgt family.

The protein localises to the cell inner membrane. The catalysed reaction is L-cysteinyl-[prolipoprotein] + a 1,2-diacyl-sn-glycero-3-phospho-(1'-sn-glycerol) = an S-1,2-diacyl-sn-glyceryl-L-cysteinyl-[prolipoprotein] + sn-glycerol 1-phosphate + H(+). It functions in the pathway protein modification; lipoprotein biosynthesis (diacylglyceryl transfer). Functionally, catalyzes the transfer of the diacylglyceryl group from phosphatidylglycerol to the sulfhydryl group of the N-terminal cysteine of a prolipoprotein, the first step in the formation of mature lipoproteins. This Cupriavidus necator (strain ATCC 17699 / DSM 428 / KCTC 22496 / NCIMB 10442 / H16 / Stanier 337) (Ralstonia eutropha) protein is Phosphatidylglycerol--prolipoprotein diacylglyceryl transferase.